A 685-amino-acid chain; its full sequence is Pentatricopeptide repeat-containing protein At5g19020, mitochondrial (685 aa).

The transit peptide at 1–23 (MIKLIRFFRSRRCWVISLQARCF) directs the protein to the mitochondrion. PPR repeat units lie at residues 40 to 74 (TERA…GLDS), 75 to 105 (NGYI…HAKL), 106 to 136 (DSAS…MPER), 137 to 171 (SCVS…GIML), 172 to 206 (NEVT…KLEG), 207 to 237 (RVFV…MPER), 238 to 268 (NLVT…ITEK), 269 to 303 (DIVS…GMKP), 304 to 338 (SEVM…GFDC), 339 to 369 (YDFL…SVKD), 370 to 400 (HIAS…THDK), 401 to 435 (DIFS…SQVK), 437 to 471 (DAIT…TIPP), 472 to 502 (NDNL…TKNI), 506 to 540 (TISP…PIKP), 541 to 576 (NSIT…GIEP), and 577 to 607 (DIKH…MPVK). Residues 612–685 (IWGMLLSASR…EWSRAFSGVV (74 aa)) are type E motif; degenerate.

It belongs to the PPR family. PCMP-E subfamily.

The protein localises to the mitochondrion. In Arabidopsis thaliana (Mouse-ear cress), this protein is Pentatricopeptide repeat-containing protein At5g19020, mitochondrial (PCMP-E42).